Reading from the N-terminus, the 741-residue chain is Transketolase-1, chloroplastic (741 aa).

The transit peptide at 1 to 66 directs the protein to the chloroplast; the sequence is MASTSSLALS…NRSLRPLVRA (66 aa). Positions 22 to 51 are disordered; it reads GSDQRGSLPAFSGLKSTGSRASASSRRRIA. An N-acetylalanine modification is found at alanine 67. Histidine 103 lines the substrate pocket. Residues histidine 143 and 192–194 contribute to the thiamine diphosphate site; that span reads GPL. Aspartate 233 is a Mg(2+) binding site. Residues glycine 234 and asparagine 263 each coordinate thiamine diphosphate. 2 residues coordinate Mg(2+): asparagine 263 and isoleucine 265. A substrate-binding site is contributed by histidine 340. Histidine 340 contributes to the thiamine diphosphate binding site. A Phosphoserine modification is found at serine 428. Positions 434 and 461 each coordinate substrate. Thiamine diphosphate-binding residues include glutamate 488 and phenylalanine 515. The active-site Proton donor is the glutamate 488. Substrate-binding residues include histidine 539, aspartate 547, and arginine 598.

It belongs to the transketolase family. Homodimer. It depends on Mg(2+) as a cofactor. Ca(2+) is required as a cofactor. Mn(2+) serves as cofactor. Requires Co(2+) as cofactor. The cofactor is thiamine diphosphate.

It is found in the plastid. The protein resides in the chloroplast stroma. The enzyme catalyses D-sedoheptulose 7-phosphate + D-glyceraldehyde 3-phosphate = aldehydo-D-ribose 5-phosphate + D-xylulose 5-phosphate. It participates in carbohydrate biosynthesis; Calvin cycle. In terms of biological role, catalyzes the reversible transfer of a two-carbon ketol group from fructose-6-phosphate or sedoheptulose-7-phosphate to glyceraldehyde-3-phosphate to yield xylulose-5-phosphate and erythrose-4-phosphate or ribose-5-phosphate, respectively. Could act as a stress sensor involved in adaptation process. The protein is Transketolase-1, chloroplastic (TKL-1) of Arabidopsis thaliana (Mouse-ear cress).